The sequence spans 164 residues: ATP synthase subunit b 1 (164 aa).

The chain crosses the membrane as a helical span at residues 8-28; the sequence is PETWVAIAFVILMGLFAYLGV.

This sequence belongs to the ATPase B chain family. As to quaternary structure, F-type ATPases have 2 components, F(1) - the catalytic core - and F(0) - the membrane proton channel. F(1) has five subunits: alpha(3), beta(3), gamma(1), delta(1), epsilon(1). F(0) has three main subunits: a(1), b(2) and c(10-14). The alpha and beta chains form an alternating ring which encloses part of the gamma chain. F(1) is attached to F(0) by a central stalk formed by the gamma and epsilon chains, while a peripheral stalk is formed by the delta and b chains.

It localises to the cell inner membrane. In terms of biological role, f(1)F(0) ATP synthase produces ATP from ADP in the presence of a proton or sodium gradient. F-type ATPases consist of two structural domains, F(1) containing the extramembraneous catalytic core and F(0) containing the membrane proton channel, linked together by a central stalk and a peripheral stalk. During catalysis, ATP synthesis in the catalytic domain of F(1) is coupled via a rotary mechanism of the central stalk subunits to proton translocation. Component of the F(0) channel, it forms part of the peripheral stalk, linking F(1) to F(0). In Bradyrhizobium sp. (strain ORS 278), this protein is ATP synthase subunit b 1.